A 561-amino-acid polypeptide reads, in one-letter code: MAEASQLFKEFKIQSVSEFFRRNAAMLGYTGKVRSLTTLVHEAVTNSLDACEEAGIPPYIRVEIEELGREHYKVVVEDNGPGIPEKYITHVFGKMLAGTKAHRNIQSRGQQGIGISGAVMFAQITSGKATRVITSTGDEIIEAWVKIDVDKNEGKIVKKEKHPNPDGWHGTRIELEVKNVKYMRSKQGVYWYLKLTAIANPHAHIELIEPDGKLIVFPRSSEEVPEPPVEMKPHPKGVLTDDVYRMAKKTKRQSVRRFLIGEFSRISDKKVDELIEYVAALRLIKKVGDKKVQEQLYERLMKGEVKAVLRSFRGYTKVVKQVAKMMEKPPEKLTWHEAEEIVEAFKYMKFLAPPTHGLRPIGEENIEKGLKGILKPEFVTAVTRPPKVYSGGIPFQVEVGLAYGGEIPSGFELLRYANRVPLLFDAGSCVTTQAARSIDWKRYKVDDLDRTPLVLMINVVSVHVPYTGTGKQSIASVDEIYNEIRLAIMDAARRLQTYLSGKHRRLYQVKRKKTFEKYVPEIARALSVLTGESEEKIREYFLNFIESHFASKEAVEVSENA.

ATP contacts are provided by residues asparagine 46, aspartate 78, 99–100 (TK), 109–116 (GQQGIGIS), and lysine 471.

This sequence belongs to the TOP6B family. As to quaternary structure, homodimer. Heterotetramer of two Top6A and two Top6B chains.

It carries out the reaction ATP-dependent breakage, passage and rejoining of double-stranded DNA.. Relaxes both positive and negative superturns and exhibits a strong decatenase activity. The polypeptide is Type 2 DNA topoisomerase 6 subunit B (Thermococcus gammatolerans (strain DSM 15229 / JCM 11827 / EJ3)).